We begin with the raw amino-acid sequence, 275 residues long: Penicillin-insensitive murein endopeptidase (275 aa).

A signal peptide spans 1–19 (MKNWIVGMVALVTMVPVMA). 3 cysteine pairs are disulfide-bonded: cysteine 44-cysteine 264, cysteine 187-cysteine 235, and cysteine 216-cysteine 223. Zn(2+) contacts are provided by histidine 110, histidine 113, aspartate 120, aspartate 147, and histidine 211. The tract at residues 227–262 (DTPPPGDGCGAELESWFQPPPPSAKPGKTLPPPLPP) is disordered. Residues 244-262 (QPPPPSAKPGKTLPPPLPP) are compositionally biased toward pro residues.

It belongs to the peptidase M74 family. In terms of assembly, dimer. Zn(2+) is required as a cofactor.

Its subcellular location is the periplasm. Murein endopeptidase that cleaves the D-alanyl-meso-2,6-diamino-pimelyl amide bond that connects peptidoglycan strands. Likely plays a role in the removal of murein from the sacculus. The polypeptide is Penicillin-insensitive murein endopeptidase (Yersinia pestis).